Reading from the N-terminus, the 1171-residue chain is Protein diaphanous homolog 3 (1171 aa).

A compositionally biased stretch (basic and acidic residues) spans 1–15 (MERHRARALGRDSKS). Residues 1 to 40 (MERHRARALGRDSKSSRRKGLQSAPPAGPYEPGEKRPKLH) form a disordered region. The short motif at 16 to 39 (SRRKGLQSAPPAGPYEPGEKRPKL) is the Nuclear localization signal element. T47 carries the phosphothreonine modification. At S56 the chain carries Phosphoserine. The interval 60–95 (PGSKKERPPLPHLKTVSGISDSSSLSSETMENNPKA) is disordered. The segment covering 76-86 (SGISDSSSLSS) has biased composition (low complexity). The GBD/FH3 domain occupies 93-455 (PKALPESEVL…QIVLHRDGTD (363 aa)). S154 bears the Phosphoserine mark. 2 coiled-coil regions span residues 373–403 (EHKE…YSML) and 478–533 (QAKL…FGAL). The tract at residues 532–601 (ALPPGTKIPL…PPPPLGFLGG (70 aa)) is disordered. The FH1 domain maps to 540 to 610 (PLQPSVEGEA…GQSSIPLNLP (71 aa)). Residues 553–596 (ALPPAPPALSGGVPPPPPPPPPPPPPLPGMPMPFGGPVPPPPPL) show a composition bias toward pro residues. Residue S604 is modified to Phosphoserine. The FH2 domain occupies 615–1013 (PKKEFKPEIS…EKRARIAKER (399 aa)). Coiled coils occupy residues 887–918 (DKAS…LETF) and 988–1038 (MLAL…GDET). The DAD domain occupies 1036–1066 (DETGVMDSLLEALQSGAAFRDRRKRTPKLKD). Residues S1072 and S1157 each carry the phosphoserine modification. The Nuclear export signal signature appears at 1162 to 1171 (EALLARLRAL).

Belongs to the formin homology family. Diaphanous subfamily. Ubiquitinated.

It is found in the cytoplasm. Its subcellular location is the nucleus. In terms of biological role, actin nucleation and elongation factor required for the assembly of F-actin structures, such as actin cables and stress fibers. Required for cytokinesis, stress fiber formation and transcriptional activation of the serum response factor. Binds to GTP-bound form of Rho and to profilin: acts in a Rho-dependent manner to recruit profilin to the membrane, where it promotes actin polymerization. DFR proteins couple Rho and Src tyrosine kinase during signaling and the regulation of actin dynamics. Also acts as an actin nucleation and elongation factor in the nucleus by promoting nuclear actin polymerization inside the nucleus to drive serum-dependent SRF-MRTFA activity. The polypeptide is Protein diaphanous homolog 3 (Diaph3) (Mus musculus (Mouse)).